A 216-amino-acid chain; its full sequence is PRA1 family protein B6 (216 aa).

At alanine 2 the chain carries N-acetylalanine. The next 5 helical transmembrane spans lie at 83 to 103, 105 to 125, 135 to 155, 159 to 179, and 186 to 206; these read LVAI…FLLA, LAAS…LVIG, LGIL…GSLL, LAVG…EDLF, and IGSG…AAAI.

It belongs to the PRA1 family. In terms of assembly, interacts with PRA1B1, PRA1B2, PRA1B3, PRA1B4, PRA1B5 and PRA1E. In terms of tissue distribution, expressed in hypocotyls, roots, lateral roots, lateral root caps, columella cells, leaves and stomata.

Its subcellular location is the endoplasmic reticulum membrane. In terms of biological role, may be involved in both secretory and endocytic intracellular trafficking in the endosomal/prevacuolar compartments. The chain is PRA1 family protein B6 (PRA1B6) from Arabidopsis thaliana (Mouse-ear cress).